The following is a 156-amino-acid chain: ATP synthase subunit b (156 aa).

Residues 3–23 (INFTLLAQALAFAGLIWIIAT) traverse the membrane as a helical segment.

It belongs to the ATPase B chain family. In terms of assembly, F-type ATPases have 2 components, F(1) - the catalytic core - and F(0) - the membrane proton channel. F(1) has five subunits: alpha(3), beta(3), gamma(1), delta(1), epsilon(1). F(0) has three main subunits: a(1), b(2) and c(10-14). The alpha and beta chains form an alternating ring which encloses part of the gamma chain. F(1) is attached to F(0) by a central stalk formed by the gamma and epsilon chains, while a peripheral stalk is formed by the delta and b chains.

It is found in the cell membrane. Its function is as follows. F(1)F(0) ATP synthase produces ATP from ADP in the presence of a proton or sodium gradient. F-type ATPases consist of two structural domains, F(1) containing the extramembraneous catalytic core and F(0) containing the membrane proton channel, linked together by a central stalk and a peripheral stalk. During catalysis, ATP synthesis in the catalytic domain of F(1) is coupled via a rotary mechanism of the central stalk subunits to proton translocation. Component of the F(0) channel, it forms part of the peripheral stalk, linking F(1) to F(0). This is ATP synthase subunit b from Stenotrophomonas maltophilia (strain K279a).